The sequence spans 332 residues: Holliday junction branch migration complex subunit RuvB (332 aa).

A large ATPase domain (RuvB-L) region spans residues 1-181 (MSRILDNEIM…FGITGHMEYY (181 aa)). ATP is bound by residues Leu-20, Arg-21, Gly-62, Lys-65, Thr-66, Thr-67, 128-130 (EDF), Arg-171, Tyr-181, and Arg-218. Thr-66 lines the Mg(2+) pocket. The interval 182 to 252 (AHAGLTEIVE…ITDKALTMLD (71 aa)) is small ATPAse domain (RuvB-S). Positions 255-332 (HEGLDYVDQK…EHLGYEYSEK (78 aa)) are head domain (RuvB-H). The DNA site is built by Arg-291, Arg-310, Arg-312, and Arg-315.

It belongs to the RuvB family. In terms of assembly, homohexamer. Forms an RuvA(8)-RuvB(12)-Holliday junction (HJ) complex. HJ DNA is sandwiched between 2 RuvA tetramers; dsDNA enters through RuvA and exits via RuvB. An RuvB hexamer assembles on each DNA strand where it exits the tetramer. Each RuvB hexamer is contacted by two RuvA subunits (via domain III) on 2 adjacent RuvB subunits; this complex drives branch migration. In the full resolvosome a probable DNA-RuvA(4)-RuvB(12)-RuvC(2) complex forms which resolves the HJ.

It localises to the cytoplasm. It carries out the reaction ATP + H2O = ADP + phosphate + H(+). Its function is as follows. The RuvA-RuvB-RuvC complex processes Holliday junction (HJ) DNA during genetic recombination and DNA repair, while the RuvA-RuvB complex plays an important role in the rescue of blocked DNA replication forks via replication fork reversal (RFR). RuvA specifically binds to HJ cruciform DNA, conferring on it an open structure. The RuvB hexamer acts as an ATP-dependent pump, pulling dsDNA into and through the RuvAB complex. RuvB forms 2 homohexamers on either side of HJ DNA bound by 1 or 2 RuvA tetramers; 4 subunits per hexamer contact DNA at a time. Coordinated motions by a converter formed by DNA-disengaged RuvB subunits stimulates ATP hydrolysis and nucleotide exchange. Immobilization of the converter enables RuvB to convert the ATP-contained energy into a lever motion, pulling 2 nucleotides of DNA out of the RuvA tetramer per ATP hydrolyzed, thus driving DNA branch migration. The RuvB motors rotate together with the DNA substrate, which together with the progressing nucleotide cycle form the mechanistic basis for DNA recombination by continuous HJ branch migration. Branch migration allows RuvC to scan DNA until it finds its consensus sequence, where it cleaves and resolves cruciform DNA. The sequence is that of Holliday junction branch migration complex subunit RuvB from Streptococcus pneumoniae (strain JJA).